The chain runs to 306 residues: Recombination-associated protein RdgC (306 aa).

This sequence belongs to the RdgC family.

It is found in the cytoplasm. The protein resides in the nucleoid. Functionally, may be involved in recombination. This Pseudomonas syringae pv. syringae (strain B728a) protein is Recombination-associated protein RdgC.